The following is a 324-amino-acid chain: Aprataxin (324 aa).

The 50-residue stretch at 23-72 (SVTLGRGPDTKIKDKKCSREQVELRADCNRGFVTVKQLGVNPTLVDDVVV) folds into the FHA-like domain. Residues 100–160 (TEDTSRSKPS…QGLKASMQDP (61 aa)) are disordered. A compositionally biased stretch (polar residues) spans 111 to 125 (RAQQIQSPTKTTADV). Residues 150 to 255 (SQGLKASMQD…ISQDFDSPCL (106 aa)) form the HIT domain. Interaction with DNA substrate regions lie at residues 175-179 (DKYPK) and 237-238 (SM). The Histidine triad motif signature appears at 240 to 244 (HVHLH). Catalysis depends on H242, which acts as the Tele-AMP-histidine intermediate. A C2H2-type zinc finger spans residues 299–321 (LRCHVCGKEQTTIPKLKDHLKTH).

The protein resides in the nucleus. It is found in the nucleoplasm. Its subcellular location is the nucleolus. It carries out the reaction a 5'-end adenosine-5'-diphospho-5'-2'-deoxyribonucleoside-DNA + H2O = a 5'-end 5'-phospho-2'-deoxyribonucleoside-DNA + AMP + 2 H(+). It catalyses the reaction a 5'-end adenosine-5'-diphospho-5'-ribonucleoside-2'-deoxyribonucleotide-DNA + H2O = a 5'-end 5'-phospho-ribonucleoside-2'-deoxyribonucleotide-DNA + AMP + 2 H(+). The catalysed reaction is a 3'-end 2'-deoxyribonucleotide-3'-diphospho-5'-guanosine-DNA + H2O = a 3'-end 2'-deoxyribonucleotide 3'-phosphate-DNA + GMP + 2 H(+). Functionally, DNA-binding protein involved in single-strand DNA break repair, double-strand DNA break repair and base excision repair. Resolves abortive DNA ligation intermediates formed either at base excision sites, or when DNA ligases attempt to repair non-ligatable breaks induced by reactive oxygen species. Catalyzes the release of adenylate groups covalently linked to 5'-phosphate termini, resulting in the production of 5'-phosphate termini that can be efficiently rejoined. Also able to hydrolyze adenosine 5'-monophosphoramidate (AMP-NH(2)) and diadenosine tetraphosphate (AppppA), but with lower catalytic activity. Likewise, catalyzes the release of 3'-linked guanosine (DNAppG) and inosine (DNAppI) from DNA, but has higher specific activity with 5'-linked adenosine (AppDNA). The polypeptide is Aprataxin (aptx) (Danio rerio (Zebrafish)).